Reading from the N-terminus, the 370-residue chain is tRNA-specific 2-thiouridylase MnmA (370 aa).

ATP contacts are provided by residues 6-13 (AMSGGVDS) and Leu-32. The active-site Nucleophile is the Cys-101. An intrachain disulfide couples Cys-101 to Cys-193. Gly-125 is an ATP binding site. Residues 143-145 (KDQ) form an interaction with tRNA region. Cys-193 functions as the Cysteine persulfide intermediate in the catalytic mechanism.

Belongs to the MnmA/TRMU family.

Its subcellular location is the cytoplasm. The enzyme catalyses S-sulfanyl-L-cysteinyl-[protein] + uridine(34) in tRNA + AH2 + ATP = 2-thiouridine(34) in tRNA + L-cysteinyl-[protein] + A + AMP + diphosphate + H(+). Catalyzes the 2-thiolation of uridine at the wobble position (U34) of tRNA, leading to the formation of s(2)U34. This is tRNA-specific 2-thiouridylase MnmA from Rhodococcus erythropolis (strain PR4 / NBRC 100887).